A 129-amino-acid chain; its full sequence is Small ribosomal subunit protein uS11 (129 aa).

It belongs to the universal ribosomal protein uS11 family. Part of the 30S ribosomal subunit. Interacts with proteins S7 and S18. Binds to IF-3.

Its function is as follows. Located on the platform of the 30S subunit, it bridges several disparate RNA helices of the 16S rRNA. Forms part of the Shine-Dalgarno cleft in the 70S ribosome. The chain is Small ribosomal subunit protein uS11 from Phenylobacterium zucineum (strain HLK1).